We begin with the raw amino-acid sequence, 208 residues long: Pyrrolidone-carboxylate peptidase (208 aa).

Residues E79, C142, and H166 contribute to the active site.

It belongs to the peptidase C15 family. In terms of assembly, homotetramer made of two disulfide-linked dimers.

It localises to the cytoplasm. It catalyses the reaction Release of an N-terminal pyroglutamyl group from a polypeptide, the second amino acid generally not being Pro.. Functionally, removes 5-oxoproline from various penultimate amino acid residues except L-proline. This Pyrococcus furiosus (strain ATCC 43587 / DSM 3638 / JCM 8422 / Vc1) protein is Pyrrolidone-carboxylate peptidase (pcp).